The primary structure comprises 277 residues: MKYIGAHVSASGGVEFAPVNAHEIGANAFALFTKNQRQWVSKPLKEENIRLFKENCTKYNFQTDYILPHDSYLINLGHPEEEGLEKSRAAFLDEMQRCEQLGLKLLNFHPGSHLNKISIEDCLALIAESINLTLEKTKGVTAVIENTAGQGSNLGSEFWQLRYIIDRVNDKSRVGICLDTCHTYTAGYDIVNDYDKVFDEFEKEVGFEYLRGMHLNDSKKELGSHVDRHDNIGQGLIGSAFFERLMKDSRFDNMPLILETPDESKWAEEIAWLRSVE.

9 residues coordinate Zn(2+): H69, H109, E145, D179, H182, H214, D227, H229, and E259.

Belongs to the AP endonuclease 2 family. The cofactor is Zn(2+).

The catalysed reaction is Endonucleolytic cleavage to 5'-phosphooligonucleotide end-products.. Its function is as follows. Endonuclease IV plays a role in DNA repair. It cleaves phosphodiester bonds at apurinic or apyrimidinic (AP) sites, generating a 3'-hydroxyl group and a 5'-terminal sugar phosphate. The chain is Probable endonuclease 4 from Bacteroides thetaiotaomicron (strain ATCC 29148 / DSM 2079 / JCM 5827 / CCUG 10774 / NCTC 10582 / VPI-5482 / E50).